We begin with the raw amino-acid sequence, 80 residues long: Cell division activator CedA (80 aa).

Belongs to the CedA family.

Its function is as follows. Activates the cell division inhibited by chromosomal DNA over-replication. This chain is Cell division activator CedA, found in Escherichia coli O139:H28 (strain E24377A / ETEC).